A 359-amino-acid polypeptide reads, in one-letter code: Apelin receptor B (359 aa).

The Extracellular portion of the chain corresponds to 1-36 (MNAMDNMTADYSPDYFDDAVNSSMCEYDEWEPSYSL). N-linked (GlcNAc...) asparagine glycosylation is found at Asn6 and Asn21. Intrachain disulfides connect Cys25–Cys288 and Cys107–Cys186. A helical transmembrane segment spans residues 37 to 57 (IPVLYMLIFILGLTGNGVVIF). At 58-75 (TVWRAQSKRRAADVYIGN) the chain is on the cytoplasmic side. Residues 76-96 (LALADLTFVVTLPLWAVYTAL) form a helical membrane-spanning segment. Residues 97 to 108 (GYHWPFGVALCK) are Extracellular-facing. A helical membrane pass occupies residues 109–129 (ISSYVVLLNMYASVFCLTCLS). The Cytoplasmic portion of the chain corresponds to 130 to 151 (LDRYMAIVHSLTSTQLRTRGHM). Residues 152–172 (RASLTAIWLLSGVLAAPTLLF) traverse the membrane as a helical segment. The Extracellular segment spans residues 173–213 (RTTVYDVETNRTSCAMDFNLVVSQPGQETYWIAGLSISSTA). Asn182 is a glycosylation site (N-linked (GlcNAc...) asparagine). The helical transmembrane segment at 214-234 (LGFLIPLLAMMVCYGFIGCTV) threads the bilayer. Over 235-251 (TRHFNSLRKEDQRKRRL) the chain is Cytoplasmic. Residues 252–272 (LKIITTLVVVFAACWMPFHVV) traverse the membrane as a helical segment. The Extracellular segment spans residues 273-286 (KTMDALSYLNLAPD). Residues 287–307 (SCTFLNLLLLAHPYATCLAYV) form a helical membrane-spanning segment. At 308–359 (NSCLNPLLYAFFDLRFRSQCLCLLNLKKALHASPASSLSSQKTEAQSLATKV) the chain is on the cytoplasmic side.

The protein belongs to the G-protein coupled receptor 1 family. As to expression, mesendodermal expression at the blastoderm margin appears by 4.5 hpf. At early gastrulation, expression is maintained ventrolaterally while expression in dorsal cells and random deep cells declines. During gastrulation and segmentation, expression is maintained in adaxial, intermediate, and lateral plate mesoderm. During late segmentation, expressed in several regions including the forming heart. By 24 hpf, expressed in the dorsal aorta, caudal vein, and intersomitic blood vessels.

The protein resides in the cell membrane. Its function is as follows. G protein-coupled receptor for peptide hormones apelin (apln) and apelin receptor early endogenous ligand (apela), that plays a role in the regulation of normal cardiovascular function and fluid homeostasis. When acting as apelin receptor, activates both G(i) protein pathway that inhibits adenylate cyclase activity, and the beta-arrestin pathway that promotes internalization of the receptor. Also functions as mechanoreceptor that is activated by pathological stimuli in a G-protein-independent fashion to induce beta-arrestin signaling, hence eliciting cardiac hypertrophy. However, the presence of apelin ligand blunts cardiac hypertrophic induction from APLNR/APJ on response to pathological stimuli. Plays a key role in early development such as gastrulation, blood vessels formation and heart morphogenesis by acting as a receptor for apela hormone, promoting endoderm and mesendoderm cell migration and regulating the migration of cells fated to become myocardial progenitors, respectively. Positively regulates angioblast migration toward the embryonic midline, i.e. the position of the future vessel formation, during vasculogenesis. May promote sinus venosus (SV)-derived endothelial cells migration into the developing heart to promote coronary blood vessel development. Required for cardiovascular development, particularly for intersomitic vein angiogenesis by acting as a receptor for apln hormone. Plays a role in various processes in adults such as regulation of blood vessel formation, blood pressure, heart contractility and heart failure. Acts redundantly with agtrl1a in heart development. Functionally, g protein-coupled receptor for peptide hormones apelin (APLN) and apelin receptor early endogenous ligand (APELA/ELA), that plays a role in the regulation of normal cardiovascular function and fluid homeostasis. When acting as apelin receptor, activates both G(i) protein pathway that inhibits adenylate cyclase activity, and the beta-arrestin pathway that promotes internalization of the receptor. APLNR/APJ also functions as mechanoreceptor that is activated by pathological stimuli in a G-protein-independent fashion to induce beta-arrestin signaling, hence eliciting cardiac hypertrophy. Plays a key role in early development such as gastrulation, blood vessels formation and heart morphogenesis by acting as a APELA receptor. May promote angioblast migration toward the embryonic midline, i.e. the position of the future vessel formation, during vasculogenesis. Promotes sinus venosus (SV)-derived endothelial cells migration into the developing heart to promote coronary blood vessel development. Also plays a role in various processes in adults such as regulation of blood vessel formation, blood pressure, heart contractility and heart failure. This chain is Apelin receptor B (aplnrb), found in Danio rerio (Zebrafish).